The primary structure comprises 356 residues: Dual-specificity RNA methyltransferase RlmN (356 aa).

Residue Glu95 is the Proton acceptor of the active site. Residues 101 to 332 (EDERGTLCIS…VTVIRDRRGE (232 aa)) form the Radical SAM core domain. Cys108 and Cys338 are joined by a disulfide. Residues Cys115, Cys119, and Cys122 each contribute to the [4Fe-4S] cluster site. Residues 165–166 (GE), Ser197, 219–221 (SLH), and Asn295 contribute to the S-adenosyl-L-methionine site. The active-site S-methylcysteine intermediate is the Cys338.

The protein belongs to the radical SAM superfamily. RlmN family. [4Fe-4S] cluster is required as a cofactor.

Its subcellular location is the cytoplasm. It carries out the reaction adenosine(2503) in 23S rRNA + 2 reduced [2Fe-2S]-[ferredoxin] + 2 S-adenosyl-L-methionine = 2-methyladenosine(2503) in 23S rRNA + 5'-deoxyadenosine + L-methionine + 2 oxidized [2Fe-2S]-[ferredoxin] + S-adenosyl-L-homocysteine. It catalyses the reaction adenosine(37) in tRNA + 2 reduced [2Fe-2S]-[ferredoxin] + 2 S-adenosyl-L-methionine = 2-methyladenosine(37) in tRNA + 5'-deoxyadenosine + L-methionine + 2 oxidized [2Fe-2S]-[ferredoxin] + S-adenosyl-L-homocysteine. Specifically methylates position 2 of adenine 2503 in 23S rRNA and position 2 of adenine 37 in tRNAs. m2A2503 modification seems to play a crucial role in the proofreading step occurring at the peptidyl transferase center and thus would serve to optimize ribosomal fidelity. This Magnetococcus marinus (strain ATCC BAA-1437 / JCM 17883 / MC-1) protein is Dual-specificity RNA methyltransferase RlmN.